We begin with the raw amino-acid sequence, 313 residues long: Putative adhesin P1-like protein MPN_202 (313 aa).

The segment covering 1 to 16 (MGSQNQGSTTTTSAGN) has biased composition (low complexity). Positions 1 to 44 (MGSQNQGSTTTTSAGNPDSLVTDKVDQKGQVQTSGQNLSDTNYT) are disordered. Positions 29-44 (GQVQTSGQNLSDTNYT) are enriched in polar residues.

This sequence belongs to the adhesin P1 family.

The polypeptide is Putative adhesin P1-like protein MPN_202 (Mycoplasma pneumoniae (strain ATCC 29342 / M129 / Subtype 1) (Mycoplasmoides pneumoniae)).